A 299-amino-acid polypeptide reads, in one-letter code: Tyrosine recombinase XerC (299 aa).

The Core-binding (CB) domain maps to 1-85; it reads MQNELDAYFE…SVRGLYRYLN (85 aa). The 180-residue stretch at 106 to 285 folds into the Tyr recombinase domain; the sequence is RLPRLLDTDR…DFQHLAKVYD (180 aa). Active-site residues include arginine 146, lysine 170, histidine 237, arginine 240, and histidine 263. Residue tyrosine 272 is the O-(3'-phospho-DNA)-tyrosine intermediate of the active site.

This sequence belongs to the 'phage' integrase family. XerC subfamily. Forms a cyclic heterotetrameric complex composed of two molecules of XerC and two molecules of XerD.

It localises to the cytoplasm. Site-specific tyrosine recombinase, which acts by catalyzing the cutting and rejoining of the recombining DNA molecules. The XerC-XerD complex is essential to convert dimers of the bacterial chromosome into monomers to permit their segregation at cell division. It also contributes to the segregational stability of plasmids. The chain is Tyrosine recombinase XerC from Stutzerimonas stutzeri (strain A1501) (Pseudomonas stutzeri).